A 344-amino-acid polypeptide reads, in one-letter code: 17-beta-hydroxysteroid dehydrogenase type 1 (344 aa).

Position 3–32 (3–32 (PTVVLITGCSSGIGMHLAVRLASDRSQSFK)) interacts with NAD(+). Residues 10 to 38 (GCSS…ATLR) and Asp66 contribute to the NADP(+) site. Ser135 is subject to Phosphoserine. Ser143 is a substrate binding site. The active-site Proton acceptor is the Tyr156. NADP(+) is bound at residue Lys160.

The protein belongs to the short-chain dehydrogenases/reductases (SDR) family. As to quaternary structure, homodimer. Exists predominantly as a homodimer but also exits as monomer.

Its subcellular location is the cytoplasm. The catalysed reaction is 17beta-estradiol + NAD(+) = estrone + NADH + H(+). It catalyses the reaction 17beta-estradiol + NADP(+) = estrone + NADPH + H(+). It carries out the reaction testosterone + NADP(+) = androst-4-ene-3,17-dione + NADPH + H(+). The protein operates within steroid biosynthesis; estrogen biosynthesis. In terms of biological role, favors the reduction of estrogens and androgens. Converts estrone (E1) to a more potent estrogen, 17beta-estradiol (E2). Also has 20-alpha-HSD activity. Uses preferentially NADH. The polypeptide is 17-beta-hydroxysteroid dehydrogenase type 1 (Mus musculus (Mouse)).